A 286-amino-acid polypeptide reads, in one-letter code: KH domain-containing protein At2g38610 (286 aa).

Ser-2 bears the N-acetylserine mark. One can recognise a KH domain in the interval 141 to 208; that stretch reads EIPVDNYPNF…EHLNEQLHIL (68 aa). The interval 256 to 286 is disordered; the sequence is SNNLREESPGPSGGGSVSPFNSSGKRPKTGC. Residues Ser-263 and Ser-273 each carry the phosphoserine modification.

It is found in the nucleus. The chain is KH domain-containing protein At2g38610 from Arabidopsis thaliana (Mouse-ear cress).